Here is a 467-residue protein sequence, read N- to C-terminus: ATP synthase subunit beta (467 aa).

152–159 is a binding site for ATP; that stretch reads GGAGVGKT.

The protein belongs to the ATPase alpha/beta chains family. As to quaternary structure, F-type ATPases have 2 components, CF(1) - the catalytic core - and CF(0) - the membrane proton channel. CF(1) has five subunits: alpha(3), beta(3), gamma(1), delta(1), epsilon(1). CF(0) has three main subunits: a(1), b(2) and c(9-12). The alpha and beta chains form an alternating ring which encloses part of the gamma chain. CF(1) is attached to CF(0) by a central stalk formed by the gamma and epsilon chains, while a peripheral stalk is formed by the delta and b chains.

It localises to the cell membrane. The enzyme catalyses ATP + H2O + 4 H(+)(in) = ADP + phosphate + 5 H(+)(out). Produces ATP from ADP in the presence of a proton gradient across the membrane. The catalytic sites are hosted primarily by the beta subunits. The chain is ATP synthase subunit beta from Caldicellulosiruptor bescii (strain ATCC BAA-1888 / DSM 6725 / KCTC 15123 / Z-1320) (Anaerocellum thermophilum).